The following is a 519-amino-acid chain: MQLAELVQTSDVVARTAGRLEKIARLADALRGLAPEERLAGASWLAGELRQGRIGLGPAAVRAALEATAPADAPALAVREVDASLDRLAAARGAGSGRERAALLAALLARASADERDFLARLVLGELRQGALEGVLVEAVARAAAVPAGEVRRAVMMAGALPPVAEAALAEGAAGLSRFRLRLLEPVQPMLAQPAAGVDEALAALGEAALEWKLDGARVQVHKDGGEVRVFSRALRDVTPAVPEVVEAVRRLPASSLVLDGEAIALRGDGAPEPFQVTMRRFGRKLDVAGLREGVPLSVLFFDALHTAGEDLIARPASERHLALAAAVPDALRVPRLVTSDGAAAAAFLEGALARGHEGLLAKSLTAPYEAGRRGASWLKVKRAHTLDLVVLAAEWGSGRREGFLSNLHLGARDPEGGGFVMLGKTFKGMTDAMLAWQTERFRALALGSTDGYVVHLRPELVVEVAFDGLQESSRYPGGLALRFARVKRYREDKRPEEADTIATVRALHARQVAAERGT.

Position 211 (Glu211) interacts with ATP. Lys213 (N6-AMP-lysine intermediate) is an active-site residue. ATP contacts are provided by Arg218, Arg233, Glu262, Phe302, Arg374, and Lys380.

This sequence belongs to the ATP-dependent DNA ligase family. Mg(2+) is required as a cofactor.

It catalyses the reaction ATP + (deoxyribonucleotide)n-3'-hydroxyl + 5'-phospho-(deoxyribonucleotide)m = (deoxyribonucleotide)n+m + AMP + diphosphate.. DNA ligase that seals nicks in double-stranded DNA during DNA replication, DNA recombination and DNA repair. In Anaeromyxobacter sp. (strain Fw109-5), this protein is Probable DNA ligase.